Reading from the N-terminus, the 243-residue chain is Uroporphyrinogen-III C-methyltransferase (243 aa).

S-adenosyl-L-homocysteine contacts are provided by residues proline 12, 88 to 90, 118 to 119, methionine 166, and alanine 195; these read SGD and ST.

This sequence belongs to the precorrin methyltransferase family.

The enzyme catalyses uroporphyrinogen III + 2 S-adenosyl-L-methionine = precorrin-2 + 2 S-adenosyl-L-homocysteine + H(+). The protein operates within cofactor biosynthesis; adenosylcobalamin biosynthesis; precorrin-2 from uroporphyrinogen III: step 1/1. It participates in porphyrin-containing compound metabolism; siroheme biosynthesis; precorrin-2 from uroporphyrinogen III: step 1/1. Its function is as follows. Catalyzes the two successive C-2 and C-7 methylation reactions involved in the conversion of uroporphyrinogen III to precorrin-2 via the intermediate formation of precorrin-1. It is a step in the biosynthesis of both cobalamin (vitamin B12) and siroheme. The chain is Uroporphyrinogen-III C-methyltransferase from Synechococcus elongatus (strain ATCC 33912 / PCC 7942 / FACHB-805) (Anacystis nidulans R2).